We begin with the raw amino-acid sequence, 144 residues long: Large ribosomal subunit protein uL15 (144 aa).

The disordered stretch occupies residues 1–52 (MRLNTLSPAEGAKHSAKRLGRGIGSGLGKTGGRGHKGQKSRTGSGVRRGFEG). The segment covering 21–31 (RGIGSGLGKTG) has biased composition (gly residues).

The protein belongs to the universal ribosomal protein uL15 family. As to quaternary structure, part of the 50S ribosomal subunit.

Binds to the 23S rRNA. This Haemophilus influenzae (strain 86-028NP) protein is Large ribosomal subunit protein uL15.